The sequence spans 476 residues: Proline--tRNA ligase (476 aa).

The protein belongs to the class-II aminoacyl-tRNA synthetase family. ProS type 3 subfamily. Homodimer.

Its subcellular location is the cytoplasm. The enzyme catalyses tRNA(Pro) + L-proline + ATP = L-prolyl-tRNA(Pro) + AMP + diphosphate. In terms of biological role, catalyzes the attachment of proline to tRNA(Pro) in a two-step reaction: proline is first activated by ATP to form Pro-AMP and then transferred to the acceptor end of tRNA(Pro). This is Proline--tRNA ligase from Mycoplasma mobile (strain ATCC 43663 / 163K / NCTC 11711) (Mesomycoplasma mobile).